A 382-amino-acid polypeptide reads, in one-letter code: Pyrimidine monooxygenase RutA (382 aa).

Residues 68 to 69 (IK), Asn-134, Glu-143, 159 to 160 (RY), and Ser-209 contribute to the FMN site.

This sequence belongs to the NtaA/SnaA/DszA monooxygenase family. RutA subfamily.

The enzyme catalyses uracil + FMNH2 + NADH + O2 = (Z)-3-ureidoacrylate + FMN + NAD(+) + H2O + H(+). It carries out the reaction thymine + FMNH2 + NADH + O2 = (Z)-2-methylureidoacrylate + FMN + NAD(+) + H2O + H(+). In terms of biological role, catalyzes the pyrimidine ring opening between N-3 and C-4 by an unusual flavin hydroperoxide-catalyzed mechanism, adding oxygen atoms in the process to yield ureidoacrylate peracid, that immediately reacts with FMN forming ureidoacrylate and FMN-N(5)-oxide. The FMN-N(5)-oxide reacts spontaneously with NADH to produce FMN. Requires the flavin reductase RutF to regenerate FMN in vivo. The chain is Pyrimidine monooxygenase RutA (rutA) from Escherichia coli O157:H7.